We begin with the raw amino-acid sequence, 205 residues long: DNA-directed RNA polymerases IV and V subunit 4 (205 aa).

The segment at 1–79 (MSEKGGKGLK…TKSSKNSLHS (79 aa)) is disordered. Positions 48–60 (NVSSDQQPFQSSA) are enriched in polar residues.

The protein belongs to the eukaryotic RPB4 RNA polymerase subunit family. In terms of assembly, component of the RNA polymerase IV and V complexes. Interacts with NRPD1 and NRPE1. As to expression, expressed in shoot meristematic region and in root tips. Detected in cotyledons, flowers and young leaves.

It localises to the nucleus. Its function is as follows. DNA-dependent RNA polymerase catalyzes the transcription of DNA into RNA using the four ribonucleoside triphosphates as substrates. Component of RNA polymerases IV and V which mediate short-interfering RNAs (siRNA) accumulation and subsequent RNA-directed DNA methylation-dependent (RdDM) transcriptional gene silencing (TGS) of endogenous repeated sequences, including transposable elements. Required for the de novo DNA methylation directed by the RdDM pathway. This chain is DNA-directed RNA polymerases IV and V subunit 4 (NRPD4), found in Arabidopsis thaliana (Mouse-ear cress).